The following is a 210-amino-acid chain: Pyridoxine/pyridoxamine 5'-phosphate oxidase (210 aa).

Residues 7 to 10 (REDY) and lysine 65 each bind substrate. FMN contacts are provided by residues 60–65 (RVVLLK), 75–76 (FT), arginine 81, lysine 82, and glutamine 104. Residues tyrosine 122, arginine 126, and serine 130 each contribute to the substrate site. Residues 139 to 140 (QS) and tryptophan 183 each bind FMN. 189–191 (RLH) lines the substrate pocket. Arginine 193 is an FMN binding site.

It belongs to the pyridoxamine 5'-phosphate oxidase family. As to quaternary structure, homodimer. It depends on FMN as a cofactor.

The enzyme catalyses pyridoxamine 5'-phosphate + O2 + H2O = pyridoxal 5'-phosphate + H2O2 + NH4(+). It catalyses the reaction pyridoxine 5'-phosphate + O2 = pyridoxal 5'-phosphate + H2O2. It functions in the pathway cofactor metabolism; pyridoxal 5'-phosphate salvage; pyridoxal 5'-phosphate from pyridoxamine 5'-phosphate: step 1/1. Its pathway is cofactor metabolism; pyridoxal 5'-phosphate salvage; pyridoxal 5'-phosphate from pyridoxine 5'-phosphate: step 1/1. Its function is as follows. Catalyzes the oxidation of either pyridoxine 5'-phosphate (PNP) or pyridoxamine 5'-phosphate (PMP) into pyridoxal 5'-phosphate (PLP). In Actinobacillus succinogenes (strain ATCC 55618 / DSM 22257 / CCUG 43843 / 130Z), this protein is Pyridoxine/pyridoxamine 5'-phosphate oxidase.